We begin with the raw amino-acid sequence, 537 residues long: CTP synthase (537 aa).

Residues 1-267 are amidoligase domain; sequence MAKYIFVTGG…DEYVIKRLNL (267 aa). S13 contributes to the CTP binding site. UTP is bound at residue S13. ATP is bound at residue 14–19; the sequence is SLGKGI. Y54 contributes to the L-glutamine binding site. D71 lines the ATP pocket. Mg(2+)-binding residues include D71 and E141. Residues 148–150, 188–193, and K224 each bind CTP; these read DIE and KTKPTQ. UTP-binding positions include 188-193 and K224; that span reads KTKPTQ. 240–242 serves as a coordination point for ATP; the sequence is RDV. The Glutamine amidotransferase type-1 domain maps to 292–534; it reads EVALVGKYVD…VKAMLNLKIN (243 aa). G354 contacts L-glutamine. The active-site Nucleophile; for glutamine hydrolysis is C381. L-glutamine contacts are provided by residues 382-385, E405, and R462; that span reads LGMQ. Active-site residues include H507 and E509.

Belongs to the CTP synthase family. Homotetramer.

It carries out the reaction UTP + L-glutamine + ATP + H2O = CTP + L-glutamate + ADP + phosphate + 2 H(+). The enzyme catalyses L-glutamine + H2O = L-glutamate + NH4(+). The catalysed reaction is UTP + NH4(+) + ATP = CTP + ADP + phosphate + 2 H(+). It functions in the pathway pyrimidine metabolism; CTP biosynthesis via de novo pathway; CTP from UDP: step 2/2. Allosterically activated by GTP, when glutamine is the substrate; GTP has no effect on the reaction when ammonia is the substrate. The allosteric effector GTP functions by stabilizing the protein conformation that binds the tetrahedral intermediate(s) formed during glutamine hydrolysis. Inhibited by the product CTP, via allosteric rather than competitive inhibition. Catalyzes the ATP-dependent amination of UTP to CTP with either L-glutamine or ammonia as the source of nitrogen. Regulates intracellular CTP levels through interactions with the four ribonucleotide triphosphates. This is CTP synthase from Caldanaerobacter subterraneus subsp. tengcongensis (strain DSM 15242 / JCM 11007 / NBRC 100824 / MB4) (Thermoanaerobacter tengcongensis).